The sequence spans 83 residues: uncharacterized protein (83 aa).

This is an uncharacterized protein from Rhizobium meliloti (strain 1021) (Ensifer meliloti).